Here is a 590-residue protein sequence, read N- to C-terminus: Complement component C8 beta chain (590 aa).

Positions 1-32 are cleaved as a signal peptide; that stretch reads MKKSWTWTWRVPAELLLLCAALGCLCVPGSRS. A propeptide spanning residues 33–54 is cleaved from the precursor; that stretch reads ERPRSLEPTVVNRSLAKSRHSR. Asparagine 44 is a glycosylation site (N-linked (GlcNAc...) asparagine). The region spanning 64 to 117 is the TSP type-1 1 domain; the sequence is DCELSSWSSWTMCDPCQKKRYRHAYLLRPSQFNGEPCNFSDKEVEDCATSRPCR. 7 disulfide bridges follow: cysteine 65/cysteine 100, cysteine 76/cysteine 110, cysteine 79/cysteine 116, cysteine 122/cysteine 133, cysteine 127/cysteine 146, cysteine 140/cysteine 155, and cysteine 162/cysteine 200. 2 C-linked (Man) tryptophan glycosylation sites follow: tryptophan 70 and tryptophan 73. An N-linked (GlcNAc...) asparagine glycan is attached at asparagine 101. Residues 120 to 157 enclose the LDL-receptor class A domain; sequence VRCEGFVCAQTGRCVNRRLLCNGDNDCGDQSDEANCRK. Ca(2+)-binding residues include leucine 138, asparagine 141, aspartate 143, aspartate 145, aspartate 151, and glutamate 152. The MACPF domain occupies 158 to 504; it reads IYKKCHHEME…EFQGEVSPCR (347 aa). 4 beta stranded membrane passes run 252–259, 262–269, 379–386, and 392–399; these read STFNLGFK, SIFEFGIN, AKNDFKLG, and VYVSLGVS. Cysteine 378 and cysteine 403 are disulfide-bonded. A Phosphothreonine modification is found at threonine 418. 4 cysteine pairs are disulfide-bonded: cysteine 503/cysteine 550, cysteine 505/cysteine 521, cysteine 508/cysteine 523, and cysteine 525/cysteine 534. The EGF-like domain maps to 505 to 535; sequence CAPCQGNGVPVQKGSRCDCICPVGFQGSACE. Residues 545–588 form the TSP type-1 2 domain; it reads DGRWSCWSRWSSCSGGQKTRRRQCNNPAPQDGGSPCSGPASETL. C-linked (Man) tryptophan glycosylation is found at tryptophan 551 and tryptophan 554. Cysteine 557 and cysteine 590 form a disulfide bridge. Residues 557 to 590 form a disordered region; sequence CSGGQKTRRRQCNNPAPQDGGSPCSGPASETLAC.

The protein belongs to the complement C6/C7/C8/C9 family. Heterotrimer of 3 chains: alpha (C8A), beta (C8B) and gamma (C8G); the alpha and gamma chains are disulfide bonded. Component of the membrane attack complex (MAC), composed of complement C5b, C6, C7, C8A, C8B, C8G and multiple copies of the pore-forming subunit C9. N-glycosylated; contains one or two bound glycans. Not O-glycosylated.

It is found in the secreted. Its subcellular location is the target cell membrane. Its activity is regulated as follows. Membrane attack complex (MAC) assembly is inhibited by CD59, thereby protecting self-cells from damage during complement activation. CD59 acts by binding to the beta-haipins of C8 (C8A and C8B), forming an intermolecular beta-sheet that prevents incorporation of the multiple copies of C9 required for complete formation of the osmolytic pore. MAC assembly is also inhibited by clusterin (CLU) chaperones that inhibit polymerization of C9. Functionally, component of the membrane attack complex (MAC), a multiprotein complex activated by the complement cascade, which inserts into a target cell membrane and forms a pore, leading to target cell membrane rupture and cell lysis. The MAC is initiated by proteolytic cleavage of C5 into complement C5b in response to the classical, alternative, lectin and GZMK complement pathways. The complement pathways consist in a cascade of proteins that leads to phagocytosis and breakdown of pathogens and signaling that strengthens the adaptive immune system. C8B, together with C8A and C8G, inserts into the target membrane, but does not form pores by itself. During MAC assembly, associates with C5b, C6 and C7 to form the C5b8 intermediate complex that inserts into the target membrane and traverses the bilayer increasing membrane rigidity. The chain is Complement component C8 beta chain (C8B) from Oryctolagus cuniculus (Rabbit).